The primary structure comprises 129 residues: Small ribosomal subunit protein uS11 (129 aa).

Belongs to the universal ribosomal protein uS11 family. In terms of assembly, part of the 30S ribosomal subunit. Interacts with proteins S7 and S18. Binds to IF-3.

Its function is as follows. Located on the platform of the 30S subunit, it bridges several disparate RNA helices of the 16S rRNA. Forms part of the Shine-Dalgarno cleft in the 70S ribosome. This chain is Small ribosomal subunit protein uS11, found in Pelotomaculum thermopropionicum (strain DSM 13744 / JCM 10971 / SI).